Reading from the N-terminus, the 150-residue chain is Catabolic 3-dehydroquinase (150 aa).

Catalysis depends on Tyr24, which acts as the Proton acceptor. Substrate contacts are provided by Asn75, His81, and Asp88. His101 (proton donor) is an active-site residue. Substrate-binding positions include 102–103 (VS) and Arg112.

It belongs to the type-II 3-dehydroquinase family. Homododecamer. Adopts a ring-like structure, composed of an arrangement of two hexameric rings stacked on top of one another.

It catalyses the reaction 3-dehydroquinate = 3-dehydroshikimate + H2O. It participates in aromatic compound metabolism; 3,4-dihydroxybenzoate biosynthesis; 3,4-dihydroxybenzoate from 3-dehydroquinate: step 1/2. Its function is as follows. Is involved in the catabolism of quinate. Allows the utilization of quinate as carbon source via the beta-ketoadipate pathway. This Aspergillus clavatus (strain ATCC 1007 / CBS 513.65 / DSM 816 / NCTC 3887 / NRRL 1 / QM 1276 / 107) protein is Catabolic 3-dehydroquinase.